The primary structure comprises 172 residues: Nascent polypeptide-associated complex subunit beta (172 aa).

2 disordered regions span residues 36-58 (KTGK…GDDK) and 142-172 (QNMQ…DKVE). Basic residues predominate over residues 41–50 (TPRRKMKRAP). The NAC-A/B domain occupies 54 to 119 (GGDDKKLQQT…GEDKELTELV (66 aa)).

It belongs to the NAC-beta family. As to quaternary structure, part of the nascent polypeptide-associated complex (NAC), consisting of EGD2 and EGD1. NAC associates with ribosomes via EGD1.

Its subcellular location is the cytoplasm. It is found in the nucleus. Functionally, component of the nascent polypeptide-associated complex (NAC), a dynamic component of the ribosomal exit tunnel, protecting the emerging polypeptides from interaction with other cytoplasmic proteins to ensure appropriate nascent protein targeting. The NAC complex also promotes mitochondrial protein import by enhancing productive ribosome interactions with the outer mitochondrial membrane and blocks the inappropriate interaction of ribosomes translating non-secretory nascent polypeptides with translocation sites in the membrane of the endoplasmic reticulum. EGD1 may act as a transcription factor that exert a negative effect on the expression of several genes that are transcribed by RNA polymerase II. The polypeptide is Nascent polypeptide-associated complex subunit beta (EGD1) (Pyricularia oryzae (strain 70-15 / ATCC MYA-4617 / FGSC 8958) (Rice blast fungus)).